Reading from the N-terminus, the 309-residue chain is Serine/threonine-protein phosphatase 2A catalytic subunit alpha isoform (309 aa).

Residues D57, H59, D85, and N117 each coordinate Mn(2+). The Zn(2+) site is built by D57, H59, and D85. 2 residues coordinate Fe(3+): D85 and N117. H118 serves as the catalytic Proton donor. 2 residues coordinate Mn(2+): H167 and H241. Fe(3+)-binding residues include H167 and H241. A Phosphotyrosine modification is found at Y307. L309 is modified (leucine methyl ester).

This sequence belongs to the PPP phosphatase family. PP-1 subfamily. In terms of assembly, PP2A consists of a common heterodimeric core enzyme composed of PPP2CA, a 36 kDa catalytic subunit (subunit C), and PPP2R1A, a 65 kDa constant regulatory subunit (PR65 or subunit A), that associates with a variety of regulatory subunits. Proteins that associate with the core dimer include three families of regulatory subunits B (the R2/B/PR55/B55, R3/B''/PR72/PR130/PR59 and R5/B'/B56 families), the 48 kDa variable regulatory subunit, viral proteins, and cell signaling molecules. Interacts with the PP2A A subunit PPP2R1A. Interacts with the regulatory subunit PPP2R2A. Interacts (via C-terminus) with PTPA. Interacts with NXN; the interaction is direct. Interacts with KCTD20. Interacts with BTBD10. Interacts with SGO1 and SGO2. Interacts with RAF1. Interaction with IGBP1 protects unassembled PPP2CA from degradative ubiquitination. Interacts with GSK3B (via C2 domain). Interacts with MFHAS1; retains PPP2CA into the cytoplasm and excludes it from the nucleus. Interacts with PABIR1/FAM122A. Interacts with ADCY8; interaction is phosphatase activity-dependent; antagonizes interaction between ADCY8 and calmodulin. Interacts with CRTC3 (when phosphorylated at 'Ser-391'). Interacts with SPRY2; the interaction is inhibited by TESK1 interaction with SPRY2, possibly by vesicular sequestration of SPRY2. Interacts with TRAF3IP3. Interacts with AMBRA1 (via PxP motifs); enhancing interaction between PPP2CA and MYC or FOXO3. Forms a complex with AMBRA1 and BECN1; AMBRA1 and BECN1 components of the complex regulate MYC stability via different pathways. Part of the core of STRIPAK complexes composed of PP2A catalytic and scaffolding subunits, the striatins (PP2A regulatory subunits), the striatin-associated proteins MOB4, STRIP1 and STRIP2, PDCD10 and members of the STE20 kinases, such as STK24 and STK26. Phosphatase component of the Integrator-PP2A (INTAC) complex, composed of the Integrator core complex and protein phosphatase 2A subunits PPP2CA and PPP2R1A. Mn(2+) serves as cofactor. It depends on Fe(3+) as a cofactor. Requires Zn(2+) as cofactor. In terms of processing, reversibly methyl esterified on Leu-309 by leucine carboxyl methyltransferase 1 (Lcmt1) and protein phosphatase methylesterase 1 (Ppme1). Carboxyl methylation influences the affinity of the catalytic subunit for the different regulatory subunits, thereby modulating the PP2A holoenzyme's substrate specificity, enzyme activity and cellular localization. Phosphorylation of either threonine (by autophosphorylation-activated protein kinase) or tyrosine results in inactivation of the phosphatase. Auto-dephosphorylation has been suggested as a mechanism for reactivation. Post-translationally, polyubiquitinated, leading to its degradation by the proteasome.

Its subcellular location is the cytoplasm. The protein resides in the nucleus. It is found in the chromosome. The protein localises to the centromere. It localises to the cytoskeleton. Its subcellular location is the spindle pole. The catalysed reaction is O-phospho-L-seryl-[protein] + H2O = L-seryl-[protein] + phosphate. It carries out the reaction O-phospho-L-threonyl-[protein] + H2O = L-threonyl-[protein] + phosphate. Inhibited by the interaction between PPP2R2A and ARPP19; this inhibition is enhanced when ARPP19 is phosphorylated. Inhibited by the interaction between PPP2R2A and PABIR1/FAM122A. In terms of biological role, catalytic subunit of protein phosphatase 2A (PP2A), a serine/threonine phosphatase involved in the regulation of a wide variety of enzymes, signal transduction pathways, and cellular events. PP2A is the major phosphatase for microtubule-associated proteins (MAPs). PP2A can modulate the activity of phosphorylase B kinase casein kinase 2, mitogen-stimulated S6 kinase, and MAP-2 kinase. Cooperates with SGO2 to protect centromeric cohesin from separase-mediated cleavage in oocytes specifically during meiosis I. Can dephosphorylate various proteins, such as AXIN1, p53/TP53, PIM3, WEE1. Activates RAF1 by dephosphorylating it at 'Ser-259'. Mediates dephosphorylation of WEE1, preventing its ubiquitin-mediated proteolysis, increasing WEE1 protein levels, and promoting the G2/M checkpoint. Mediates dephosphorylation of MYC; promoting its ubiquitin-mediated proteolysis: interaction with AMBRA1 enhances interaction between PPP2CA and MYC. Mediates dephosphorylation of FOXO3; promoting its stabilization: interaction with AMBRA1 enhances interaction between PPP2CA and FOXO3. Catalyzes dephosphorylation of the pyrin domain of NLRP3, promoting assembly of the NLRP3 inflammasome. Together with RACK1 adapter, mediates dephosphorylation of AKT1 at 'Ser-473', preventing AKT1 activation and AKT-mTOR signaling pathway. Dephosphorylation of AKT1 is essential for regulatory T-cells (Treg) homeostasis and stability. Catalyzes dephosphorylation of PIM3, promotinh PIM3 ubiquitination and proteasomal degradation. Part of the striatin-interacting phosphatase and kinase (STRIPAK) complexes. STRIPAK complexes have critical roles in protein (de)phosphorylation and are regulators of multiple signaling pathways including Hippo, MAPK, nuclear receptor and cytoskeleton remodeling. Different types of STRIPAK complexes are involved in a variety of biological processes such as cell growth, differentiation, apoptosis, metabolism and immune regulation. Key mediator of a quality checkpoint during transcription elongation as part of the Integrator-PP2A (INTAC) complex. The INTAC complex drives premature transcription termination of transcripts that are unfavorably configured for transcriptional elongation: within the INTAC complex, PPP2CA catalyzes dephosphorylation of the C-terminal domain (CTD) of Pol II subunit POLR2A/RPB1 and SUPT5H/SPT5, thereby preventing transcriptional elongation. The sequence is that of Serine/threonine-protein phosphatase 2A catalytic subunit alpha isoform (Ppp2ca) from Rattus norvegicus (Rat).